Consider the following 178-residue polypeptide: Large ribosomal subunit protein uL10 (178 aa).

This sequence belongs to the universal ribosomal protein uL10 family. As to quaternary structure, part of the ribosomal stalk of the 50S ribosomal subunit. The N-terminus interacts with L11 and the large rRNA to form the base of the stalk. The C-terminus forms an elongated spine to which L12 dimers bind in a sequential fashion forming a multimeric L10(L12)X complex.

Functionally, forms part of the ribosomal stalk, playing a central role in the interaction of the ribosome with GTP-bound translation factors. The chain is Large ribosomal subunit protein uL10 from Dictyoglomus turgidum (strain DSM 6724 / Z-1310).